A 928-amino-acid chain; its full sequence is Probable outer membrane protein pmp11 (928 aa).

The N-terminal stretch at 1-24 is a signal peptide; the sequence is MKTSIPWVLVSSVLAFSCHLQSLA. Residues 627–928 form the Autotransporter domain; that stretch reads GMEHKQGFWV…NVDVGTKLRF (302 aa).

The protein belongs to the PMP outer membrane protein family.

The protein localises to the secreted. It localises to the cell wall. The protein resides in the cell outer membrane. This is Probable outer membrane protein pmp11 (pmp11) from Chlamydia pneumoniae (Chlamydophila pneumoniae).